Here is a 227-residue protein sequence, read N- to C-terminus: Mitochondrial inner membrane protease ATP23 (227 aa).

H129 is a binding site for a divalent metal cation. E130 is an active-site residue. H133 contacts a divalent metal cation.

The protein belongs to the peptidase M76 family.

It is found in the mitochondrion inner membrane. In terms of biological role, has a dual role in the assembly of mitochondrial ATPase. Acts as a protease that removes N-terminal residues of mitochondrial ATPase CF(0) subunit 6 at the intermembrane space side. Also involved in the correct assembly of the membrane-embedded ATPase CF(0) particle, probably mediating association of subunit 6 with the subunit 9 ring. This is Mitochondrial inner membrane protease ATP23 (ATP23) from Cryptococcus neoformans var. neoformans serotype D (strain B-3501A) (Filobasidiella neoformans).